A 393-amino-acid polypeptide reads, in one-letter code: Leucine aminopeptidase 1 (393 aa).

The first 18 residues, Met1 to Ala18, serve as a signal peptide directing secretion. Positions Arg19 to Ser84 are excised as a propeptide. Asn176 is a glycosylation site (N-linked (GlcNAc...) asparagine). Residues His184, Asp202, Glu241, and Asp268 each contribute to the Zn(2+) site. Cys317 and Cys321 are disulfide-bonded. His350 serves as a coordination point for Zn(2+).

It belongs to the peptidase M28 family. M28E subfamily. In terms of assembly, monomer. Requires Zn(2+) as cofactor.

The protein resides in the secreted. Its function is as follows. Extracellular aminopeptidase that allows assimilation of proteinaceous substrates. This is Leucine aminopeptidase 1 (LAP1) from Metarhizium robertsii (strain ARSEF 23 / ATCC MYA-3075) (Metarhizium anisopliae (strain ARSEF 23)).